A 200-amino-acid chain; its full sequence is Large ribosomal subunit protein uL4 (200 aa).

The disordered stretch occupies residues 38-65; that stretch reads GRQGSKAQKTRSEVSGGGKKPWRQKGTG.

This sequence belongs to the universal ribosomal protein uL4 family. Part of the 50S ribosomal subunit.

One of the primary rRNA binding proteins, this protein initially binds near the 5'-end of the 23S rRNA. It is important during the early stages of 50S assembly. It makes multiple contacts with different domains of the 23S rRNA in the assembled 50S subunit and ribosome. Functionally, forms part of the polypeptide exit tunnel. The polypeptide is Large ribosomal subunit protein uL4 (Pseudomonas aeruginosa (strain LESB58)).